We begin with the raw amino-acid sequence, 402 residues long: Tyrosine--tRNA ligase (402 aa).

A 'HIGH' region motif is present at residues 48 to 57 (PSRPDLHLGH). The short motif at 232–236 (KMSKS) is the 'KMSKS' region element. Residue K235 participates in ATP binding. Residues 339–402 (MPIIDLLTLL…KRKFFKIRSK (64 aa)) form the S4 RNA-binding domain.

This sequence belongs to the class-I aminoacyl-tRNA synthetase family. TyrS type 2 subfamily. Homodimer.

It is found in the cytoplasm. It carries out the reaction tRNA(Tyr) + L-tyrosine + ATP = L-tyrosyl-tRNA(Tyr) + AMP + diphosphate + H(+). Catalyzes the attachment of tyrosine to tRNA(Tyr) in a two-step reaction: tyrosine is first activated by ATP to form Tyr-AMP and then transferred to the acceptor end of tRNA(Tyr). The polypeptide is Tyrosine--tRNA ligase (Chlorobium chlorochromatii (strain CaD3)).